The primary structure comprises 241 residues: 2-C-methyl-D-erythritol 4-phosphate cytidylyltransferase (241 aa).

This sequence belongs to the IspD/TarI cytidylyltransferase family. IspD subfamily. Homodimer.

It catalyses the reaction 2-C-methyl-D-erythritol 4-phosphate + CTP + H(+) = 4-CDP-2-C-methyl-D-erythritol + diphosphate. It participates in isoprenoid biosynthesis; isopentenyl diphosphate biosynthesis via DXP pathway; isopentenyl diphosphate from 1-deoxy-D-xylulose 5-phosphate: step 2/6. Catalyzes the formation of 4-diphosphocytidyl-2-C-methyl-D-erythritol from CTP and 2-C-methyl-D-erythritol 4-phosphate (MEP). The chain is 2-C-methyl-D-erythritol 4-phosphate cytidylyltransferase from Yersinia pseudotuberculosis serotype I (strain IP32953).